A 476-amino-acid polypeptide reads, in one-letter code: Serine/threonine-protein kinase sax-1 (476 aa).

The region spanning 87–381 (FESLKVIGRG…LDEIKQCPFV (295 aa)) is the Protein kinase domain. Residues 93-101 (IGRGAFGEV) and Lys116 contribute to the ATP site. Asp210 acts as the Proton acceptor in catalysis. The AGC-kinase C-terminal domain maps to 382 to 452 (KRIDWNHIRE…KRFDGLTQKM (71 aa)).

This sequence belongs to the protein kinase superfamily. AGC Ser/Thr protein kinase family. Mg(2+) serves as cofactor. In terms of tissue distribution, widely expressed in embryonic and larval neurons that contribute axons to the nerve ring and in hypodermal cells, including lateral seam cells. Also displays a punctate localization in muscle.

The protein localises to the cytoplasm. It is found in the nucleus. It carries out the reaction L-seryl-[protein] + ATP = O-phospho-L-seryl-[protein] + ADP + H(+). The catalysed reaction is L-threonyl-[protein] + ATP = O-phospho-L-threonyl-[protein] + ADP + H(+). Functionally, acts with sax-2 to restrict the growth of both primary and secondary neurites. Regulates mechanosensory tiling by controlling the termination point of sensory dendrites. In Caenorhabditis elegans, this protein is Serine/threonine-protein kinase sax-1.